The chain runs to 81 residues: Putative membrane protein insertion efficiency factor (81 aa).

This sequence belongs to the UPF0161 family.

It localises to the cell inner membrane. Could be involved in insertion of integral membrane proteins into the membrane. The sequence is that of Putative membrane protein insertion efficiency factor from Pseudomonas savastanoi pv. phaseolicola (strain 1448A / Race 6) (Pseudomonas syringae pv. phaseolicola (strain 1448A / Race 6)).